Consider the following 253-residue polypeptide: Claudin domain-containing protein 1 (253 aa).

Residues 5–25 (FATAFVIACVLSLISTIYMAA) form a helical membrane-spanning segment. N-linked (GlcNAc...) asparagine glycans are attached at residues N42 and N72. The next 3 helical transmembrane spans lie at 141-161 (FLLP…GLCA), 175-195 (ILHL…VAGI), and 216-236 (FCLA…FIWA).

The protein belongs to the PMP-22/EMP/MP20 family.

It is found in the cell junction. The protein resides in the tight junction. It localises to the cell membrane. Functionally, plays a role in negatively regulating the permeability of cells to small molecules. The sequence is that of Claudin domain-containing protein 1 (CLDND1) from Macaca fascicularis (Crab-eating macaque).